The following is a 60-amino-acid chain: Large ribosomal subunit protein bL32 (60 aa).

Positions 1-60 (MAVQQNKKSPSKRGMHRSHDFLVNPSTAIEPTTGETHLRHHISPNGFYRGRKVLKTKADE) are disordered. The span at 24-35 (NPSTAIEPTTGE) shows a compositional bias: polar residues. Over residues 49–60 (RGRKVLKTKADE) the composition is skewed to basic residues.

It belongs to the bacterial ribosomal protein bL32 family.

The sequence is that of Large ribosomal subunit protein bL32 from Bordetella petrii (strain ATCC BAA-461 / DSM 12804 / CCUG 43448).